The chain runs to 354 residues: Caffeate O-methyltransferase-like protein 2 (354 aa).

S-adenosyl-L-homocysteine contacts are provided by Gly198, Asp221, Met242, and Lys255. The Proton acceptor role is filled by His259. Catalysis depends on residues Glu287 and Glu319.

Belongs to the class I-like SAM-binding methyltransferase superfamily. Cation-independent O-methyltransferase family. COMT subfamily.

This Oryza sativa subsp. japonica (Rice) protein is Caffeate O-methyltransferase-like protein 2.